Here is a 600-residue protein sequence, read N- to C-terminus: MTIKFLSESTINRIAAGEVIERPASVVKELVENAVDGGSTKIDIILERAGKNLIIVSDDGIGMTDKELEIAVERHTTSKLNESDFLNIHTFGFRGEALPSIAAISKMLITSKKREADKAFQIKLIGGNKQQITVSVHNEGTKIEIRDLFFATPARLKFLKSDRTELAASLDIVKKIALAHPKISFNLIHNSKNLLKLKGQNKDFETNLKQRIIDVIGDVFIKNASYINFKTPDFSICGYTSIPTYSRASSEDQFLFINNRPIKDKLLQVALRVAYQDYLARDRYALCAIFLQIDPQLVDVNVHPAKAEVRFHDPNYVRNILIEAIKNALTNKSQVTVTTTDAIELFKNPLVNKQPPINKAINVNSKASEYISFNFNRNTVCQKLTLQSDKIEQEVGKCIEHDNQSYKQYKFGIAKAQLHTTYIISQTEDSIVIIDQHAVYERLGYEKIKYCLKNGELVKQRLLIPEIVELSSGEKADYLYENRDKLFKLSLTIEKFGEKSIIVTEVPNLLRDVNVQKLIQDLADHLSDFSKNIALKELIEHVIKIYICHYSIRAVRKLSVDEMNSLLRQMENMSFSAQCNHNRPTYIELKLKDIERLFRL.

The protein belongs to the DNA mismatch repair MutL/HexB family.

Its function is as follows. This protein is involved in the repair of mismatches in DNA. It is required for dam-dependent methyl-directed DNA mismatch repair. May act as a 'molecular matchmaker', a protein that promotes the formation of a stable complex between two or more DNA-binding proteins in an ATP-dependent manner without itself being part of a final effector complex. The polypeptide is DNA mismatch repair protein MutL (Rickettsia typhi (strain ATCC VR-144 / Wilmington)).